Here is a 160-residue protein sequence, read N- to C-terminus: Probable transcriptional regulator YgiV (160 aa).

Its function is as follows. Represses expression of mcbR. The polypeptide is Probable transcriptional regulator YgiV (ygiV) (Escherichia coli (strain K12)).